A 359-amino-acid polypeptide reads, in one-letter code: Phosphoserine aminotransferase (359 aa).

Arg42 lines the L-glutamate pocket. Residues 76–77 (AS), Trp102, Thr152, Asp171, and Gln194 each bind pyridoxal 5'-phosphate. The residue at position 195 (Lys195) is an N6-(pyridoxal phosphate)lysine. 236–237 (NT) serves as a coordination point for pyridoxal 5'-phosphate.

It belongs to the class-V pyridoxal-phosphate-dependent aminotransferase family. SerC subfamily. As to quaternary structure, homodimer. Pyridoxal 5'-phosphate serves as cofactor.

Its subcellular location is the cytoplasm. It catalyses the reaction O-phospho-L-serine + 2-oxoglutarate = 3-phosphooxypyruvate + L-glutamate. The enzyme catalyses 4-(phosphooxy)-L-threonine + 2-oxoglutarate = (R)-3-hydroxy-2-oxo-4-phosphooxybutanoate + L-glutamate. The protein operates within amino-acid biosynthesis; L-serine biosynthesis; L-serine from 3-phospho-D-glycerate: step 2/3. Its pathway is cofactor biosynthesis; pyridoxine 5'-phosphate biosynthesis; pyridoxine 5'-phosphate from D-erythrose 4-phosphate: step 3/5. Functionally, catalyzes the reversible conversion of 3-phosphohydroxypyruvate to phosphoserine and of 3-hydroxy-2-oxo-4-phosphonooxybutanoate to phosphohydroxythreonine. The chain is Phosphoserine aminotransferase from Vesicomyosocius okutanii subsp. Calyptogena okutanii (strain HA).